We begin with the raw amino-acid sequence, 358 residues long: Peptide chain release factor 1 (358 aa).

Gln-233 is modified (N5-methylglutamine).

It belongs to the prokaryotic/mitochondrial release factor family. In terms of processing, methylated by PrmC. Methylation increases the termination efficiency of RF1.

It localises to the cytoplasm. Its function is as follows. Peptide chain release factor 1 directs the termination of translation in response to the peptide chain termination codons UAG and UAA. In Agathobacter rectalis (strain ATCC 33656 / DSM 3377 / JCM 17463 / KCTC 5835 / VPI 0990) (Eubacterium rectale), this protein is Peptide chain release factor 1.